A 91-amino-acid polypeptide reads, in one-letter code: Signal recognition particle 19 kDa protein (91 aa).

The protein belongs to the SRP19 family. In terms of assembly, part of the signal recognition particle protein translocation system, which is composed of SRP and FtsY. Archaeal SRP consists of a 7S RNA molecule of 300 nucleotides and two protein subunits: SRP54 and SRP19.

The protein resides in the cytoplasm. Functionally, involved in targeting and insertion of nascent membrane proteins into the cytoplasmic membrane. Binds directly to 7S RNA and mediates binding of the 54 kDa subunit of the SRP. The protein is Signal recognition particle 19 kDa protein of Methanoregula boonei (strain DSM 21154 / JCM 14090 / 6A8).